The primary structure comprises 258 residues: Thiazole synthase 2 (258 aa).

The active-site Schiff-base intermediate with DXP is lysine 97. Residues glycine 158, 184–185 (AG), and 206–207 (NT) contribute to the 1-deoxy-D-xylulose 5-phosphate site.

The protein belongs to the ThiG family. In terms of assembly, homotetramer. Forms heterodimers with either ThiH or ThiS.

The protein localises to the cytoplasm. It carries out the reaction [ThiS sulfur-carrier protein]-C-terminal-Gly-aminoethanethioate + 2-iminoacetate + 1-deoxy-D-xylulose 5-phosphate = [ThiS sulfur-carrier protein]-C-terminal Gly-Gly + 2-[(2R,5Z)-2-carboxy-4-methylthiazol-5(2H)-ylidene]ethyl phosphate + 2 H2O + H(+). The protein operates within cofactor biosynthesis; thiamine diphosphate biosynthesis. In terms of biological role, catalyzes the rearrangement of 1-deoxy-D-xylulose 5-phosphate (DXP) to produce the thiazole phosphate moiety of thiamine. Sulfur is provided by the thiocarboxylate moiety of the carrier protein ThiS. In vitro, sulfur can be provided by H(2)S. In Syntrophotalea carbinolica (strain DSM 2380 / NBRC 103641 / GraBd1) (Pelobacter carbinolicus), this protein is Thiazole synthase 2.